The sequence spans 357 residues: Eukaryotic translation initiation factor 3 subunit F (357 aa).

Residues 1-82 are disordered; the sequence is MATPAVPVSA…PAPALPGPAL (82 aa). Alanine 2 bears the N-acetylalanine mark. Over residues 9 to 36 the composition is skewed to pro residues; it reads SAPPATPTPVPAAAPASVPAPTPAPAAA. A compositionally biased stretch (low complexity) spans 37 to 74; the sequence is PVPAAAPASSSDPAAAAAATAAPGQTPASAQAPAQTPA. Serine 46 bears the Phosphoserine; by CDK11; in vitro mark. One can recognise an MPN domain in the interval 92 to 222; the sequence is VRLHPVILAS…IKAYVSTLMG (131 aa). At lysine 238 the chain carries N6-acetyllysine. Serine 258 carries the phosphoserine modification.

Belongs to the eIF-3 subunit F family. Component of the eukaryotic translation initiation factor 3 (eIF-3) complex, which is composed of 13 subunits: EIF3A, EIF3B, EIF3C, EIF3D, EIF3E, EIF3F, EIF3G, EIF3H, EIF3I, EIF3J, EIF3K, EIF3L and EIF3M. The eIF-3 complex appears to include 3 stable modules: module A is composed of EIF3A, EIF3B, EIF3G and EIF3I; module B is composed of EIF3F, EIF3H, and EIF3M; and module C is composed of EIF3C, EIF3D, EIF3E, EIF3K and EIF3L. EIF3C of module C binds EIF3B of module A and EIF3H of module B, thereby linking the three modules. EIF3J is a labile subunit that binds to the eIF-3 complex via EIF3B. The eIF-3 complex interacts with RPS6KB1 under conditions of nutrient depletion. Mitogenic stimulation leads to binding and activation of a complex composed of MTOR and RPTOR, leading to phosphorylation and release of RPS6KB1 and binding of EIF4B to eIF-3. Interacts with RNF139; the interaction leads to protein translation inhibitions in a ubiquitination-dependent manner. Interacts with DTX1, the interaction is required for deubiquitinating activity towards NOTCH1. Post-translationally, phosphorylation is enhanced upon serum stimulation. Phosphorylated during apoptosis by caspase-processed CDK11.

It localises to the cytoplasm. The catalysed reaction is Thiol-dependent hydrolysis of ester, thioester, amide, peptide and isopeptide bonds formed by the C-terminal Gly of ubiquitin (a 76-residue protein attached to proteins as an intracellular targeting signal).. In terms of biological role, component of the eukaryotic translation initiation factor 3 (eIF-3) complex, which is required for several steps in the initiation of protein synthesis. The eIF-3 complex associates with the 40S ribosome and facilitates the recruitment of eIF-1, eIF-1A, eIF-2:GTP:methionyl-tRNAi and eIF-5 to form the 43S pre-initiation complex (43S PIC). The eIF-3 complex stimulates mRNA recruitment to the 43S PIC and scanning of the mRNA for AUG recognition. The eIF-3 complex is also required for disassembly and recycling of post-termination ribosomal complexes and subsequently prevents premature joining of the 40S and 60S ribosomal subunits prior to initiation. The eIF-3 complex specifically targets and initiates translation of a subset of mRNAs involved in cell proliferation, including cell cycling, differentiation and apoptosis, and uses different modes of RNA stem-loop binding to exert either translational activation or repression. Its function is as follows. Deubiquitinates activated NOTCH1, promoting its nuclear import, thereby acting as a positive regulator of Notch signaling. The protein is Eukaryotic translation initiation factor 3 subunit F of Homo sapiens (Human).